Reading from the N-terminus, the 421-residue chain is Gamma-glutamyl phosphate reductase (421 aa).

The protein belongs to the gamma-glutamyl phosphate reductase family.

It is found in the cytoplasm. The enzyme catalyses L-glutamate 5-semialdehyde + phosphate + NADP(+) = L-glutamyl 5-phosphate + NADPH + H(+). Its pathway is amino-acid biosynthesis; L-proline biosynthesis; L-glutamate 5-semialdehyde from L-glutamate: step 2/2. Functionally, catalyzes the NADPH-dependent reduction of L-glutamate 5-phosphate into L-glutamate 5-semialdehyde and phosphate. The product spontaneously undergoes cyclization to form 1-pyrroline-5-carboxylate. The polypeptide is Gamma-glutamyl phosphate reductase (Pseudomonas aeruginosa (strain ATCC 15692 / DSM 22644 / CIP 104116 / JCM 14847 / LMG 12228 / 1C / PRS 101 / PAO1)).